We begin with the raw amino-acid sequence, 153 residues long: Cytochrome c-type biogenesis protein CcmE (153 aa).

Topologically, residues 1-8 (MMTPRQRR) are cytoplasmic. A helical; Signal-anchor for type II membrane protein membrane pass occupies residues 9 to 29 (MTWVALMVAGVSLAAFFALTA). At 30 to 153 (FQKNLLYFYT…PADYSEYRKK (124 aa)) the chain is on the periplasmic side. Residues H124 and Y128 each contribute to the heme site. The disordered stretch occupies residues 134–153 (AESLKKNGGLPADYSEYRKK).

The protein belongs to the CcmE/CycJ family.

The protein localises to the cell inner membrane. Its function is as follows. Heme chaperone required for the biogenesis of c-type cytochromes. Transiently binds heme delivered by CcmC and transfers the heme to apo-cytochromes in a process facilitated by CcmF and CcmH. The protein is Cytochrome c-type biogenesis protein CcmE of Methylococcus capsulatus (strain ATCC 33009 / NCIMB 11132 / Bath).